The sequence spans 223 residues: Phosphoribosylformylglycinamidine synthase subunit PurQ (223 aa).

A Glutamine amidotransferase type-1 domain is found at 3–223 (SAVVQLPGLN…FASALDVVAA (221 aa)). The active-site Nucleophile is Cys86. Catalysis depends on residues His196 and Glu198.

Part of the FGAM synthase complex composed of 1 PurL, 1 PurQ and 2 PurS subunits.

It is found in the cytoplasm. The catalysed reaction is N(2)-formyl-N(1)-(5-phospho-beta-D-ribosyl)glycinamide + L-glutamine + ATP + H2O = 2-formamido-N(1)-(5-O-phospho-beta-D-ribosyl)acetamidine + L-glutamate + ADP + phosphate + H(+). It carries out the reaction L-glutamine + H2O = L-glutamate + NH4(+). It functions in the pathway purine metabolism; IMP biosynthesis via de novo pathway; 5-amino-1-(5-phospho-D-ribosyl)imidazole from N(2)-formyl-N(1)-(5-phospho-D-ribosyl)glycinamide: step 1/2. Its function is as follows. Part of the phosphoribosylformylglycinamidine synthase complex involved in the purines biosynthetic pathway. Catalyzes the ATP-dependent conversion of formylglycinamide ribonucleotide (FGAR) and glutamine to yield formylglycinamidine ribonucleotide (FGAM) and glutamate. The FGAM synthase complex is composed of three subunits. PurQ produces an ammonia molecule by converting glutamine to glutamate. PurL transfers the ammonia molecule to FGAR to form FGAM in an ATP-dependent manner. PurS interacts with PurQ and PurL and is thought to assist in the transfer of the ammonia molecule from PurQ to PurL. This is Phosphoribosylformylglycinamidine synthase subunit PurQ from Rhizobium etli (strain ATCC 51251 / DSM 11541 / JCM 21823 / NBRC 15573 / CFN 42).